A 246-amino-acid polypeptide reads, in one-letter code: MQALLFLMALLLPSGAGAEEIIGGVEARPHSRPYMAHLKIITDRGSEDRCGGFLIAPQFVLTAAHCKGREITVTLGAHDVSKSESTQQRIKVEKQIIHKNYNVSFNLYDIMLLKLEEKAELTPTVDVIPLPGPSDFIDPGKMCWTAGWGKTGEKEPTSETLREVELRIMDKEACKMYKHYDYNFQVCVGSSTKLKTAYMGDSGGPLLCAGVAHGIVSYGDSHGKPPAVFTRISAYVPWIKTVINGK.

The N-terminal stretch at 1–18 is a signal peptide; it reads MQALLFLMALLLPSGAGA. The propeptide at 19 to 20 is activation peptide; that stretch reads EE. The region spanning 21-244 is the Peptidase S1 domain; that stretch reads IIGGVEARPH…YVPWIKTVIN (224 aa). Cys50 and Cys66 are oxidised to a cystine. The active-site Charge relay system is the His65. An N-linked (GlcNAc...) asparagine glycan is attached at Asn102. Asp109 functions as the Charge relay system in the catalytic mechanism. 2 cysteine pairs are disulfide-bonded: Cys143-Cys208 and Cys174-Cys187. The active-site Charge relay system is the Ser202.

The protein belongs to the peptidase S1 family. Granzyme subfamily. Mucosal mast cells.

It is found in the secreted. The protein localises to the cytoplasmic granule. Functionally, has a chymotrypsin-like activity. This is Mast cell protease 1 (Mcpt1) from Mus musculus (Mouse).